The following is a 642-amino-acid chain: Eukaryotic translation initiation factor 2A (642 aa).

WD repeat units lie at residues 69–115 (MKLS…KKDC), 186–224 (TYLISPAEHPTICTFTPEKGGKPAQLIIWALSEGKITKK), 289–331 (LTTG…HSLP), and 374–419 (FDAT…VFVK). The disordered stretch occupies residues 485-593 (ISQHPSREAS…KETSPEEKKI (109 aa)). Low complexity-rich tracts occupy residues 493-507 (ASSNGNGSKAKAGGA) and 563-583 (TSPDSTPAPSAPASTNAPTNN). Phosphoserine occurs at positions 564, 567, and 572.

The protein belongs to the WD repeat EIF2A family. Post-translationally, ubiquitinated, probably leading to its degradation. May explain why it has a short half-life of 17 minutes.

Its function is as follows. Functions in the early steps of protein synthesis of a small number of specific mRNAs. Acts by directing the binding of methionyl-tRNAi to 40S ribosomal subunits. In contrast to the eIF-2 complex, it binds methionyl-tRNAi to 40S subunits in a codon-dependent manner, whereas the eIF-2 complex binds methionyl-tRNAi to 40S subunits in a GTP-dependent manner. Specifically associates with both 40S subunits and 80S ribosomes. The polypeptide is Eukaryotic translation initiation factor 2A (Saccharomyces cerevisiae (strain ATCC 204508 / S288c) (Baker's yeast)).